A 325-amino-acid polypeptide reads, in one-letter code: Putative 1-aminocyclopropane-1-carboxylate deaminase (325 aa).

Lys54 bears the N6-(pyridoxal phosphate)lysine mark.

This sequence belongs to the ACC deaminase/D-cysteine desulfhydrase family. The cofactor is pyridoxal 5'-phosphate.

The enzyme catalyses 1-aminocyclopropane-1-carboxylate + H2O = 2-oxobutanoate + NH4(+). In Pyrococcus horikoshii (strain ATCC 700860 / DSM 12428 / JCM 9974 / NBRC 100139 / OT-3), this protein is Putative 1-aminocyclopropane-1-carboxylate deaminase.